The chain runs to 21 residues: VLDIYEQKLGQTRVLDIYEQK.

It belongs to the GST superfamily. Phi family.

It catalyses the reaction RX + glutathione = an S-substituted glutathione + a halide anion + H(+). Its function is as follows. Conjugation of reduced glutathione to a wide number of exogenous and endogenous hydrophobic electrophiles. In plants, may have a detoxification role against certain herbicides. The chain is Glutathione S-transferase 1 from Populus euphratica (Euphrates poplar).